Consider the following 191-residue polypeptide: Holliday junction branch migration complex subunit RuvA (191 aa).

A domain I region spans residues 1–64; sequence MIGTLSGIIE…DNVPQLYGFT (64 aa). Residues 65–145 form a domain II region; that stretch reads DTEEQNCLKM…FNIMDKRGPS (81 aa). Positions 146–149 are flexible linker; sequence VEDS. Residues 149 to 191 are domain III; it reads SDALSALLSLGYEKTRVLNALEKVGVSHNLSDTVRFALKELSK.

It belongs to the RuvA family. In terms of assembly, homotetramer. Forms an RuvA(8)-RuvB(12)-Holliday junction (HJ) complex. HJ DNA is sandwiched between 2 RuvA tetramers; dsDNA enters through RuvA and exits via RuvB. An RuvB hexamer assembles on each DNA strand where it exits the tetramer. Each RuvB hexamer is contacted by two RuvA subunits (via domain III) on 2 adjacent RuvB subunits; this complex drives branch migration. In the full resolvosome a probable DNA-RuvA(4)-RuvB(12)-RuvC(2) complex forms which resolves the HJ.

It is found in the cytoplasm. Functionally, the RuvA-RuvB-RuvC complex processes Holliday junction (HJ) DNA during genetic recombination and DNA repair, while the RuvA-RuvB complex plays an important role in the rescue of blocked DNA replication forks via replication fork reversal (RFR). RuvA specifically binds to HJ cruciform DNA, conferring on it an open structure. The RuvB hexamer acts as an ATP-dependent pump, pulling dsDNA into and through the RuvAB complex. HJ branch migration allows RuvC to scan DNA until it finds its consensus sequence, where it cleaves and resolves the cruciform DNA. The sequence is that of Holliday junction branch migration complex subunit RuvA from Anaplasma phagocytophilum (strain HZ).